Consider the following 185-residue polypeptide: Sarcoplasmic calcium-binding proteins I, III, and IV (185 aa).

4 EF-hand domains span residues 5 to 41 (FQKQKIKFTFDFFLDYNKDGSIQWEDFEEMIKRYKEV), 57 to 92 (SLEDEWRDLKGRADINKDDVVSWEEYLAMWEKTIAT), 102 to 137 (WCQNRIPFLFKGMDVSGDGIVDLEEFQNYCKNFQLQ), and 138 to 173 (CADVPAVYNVITDGGKVTFDLNRYKELYYRLLTSPA). 13 residues coordinate Ca(2+): aspartate 19, asparagine 21, aspartate 23, serine 25, aspartate 30, aspartate 70, asparagine 72, aspartate 74, glutamate 81, aspartate 115, serine 117, aspartate 119, and glutamate 126.

Functionally, like parvalbumins, SCPs seem to be more abundant in fast contracting muscles, but no functional relationship can be established from this distribution. This chain is Sarcoplasmic calcium-binding proteins I, III, and IV, found in Branchiostoma lanceolatum (Common lancelet).